The primary structure comprises 217 residues: Phosphatidylserine decarboxylase proenzyme (217 aa).

The active-site Schiff-base intermediate with substrate; via pyruvic acid is Ser-183. Ser-183 is modified (pyruvic acid (Ser); by autocatalysis).

This sequence belongs to the phosphatidylserine decarboxylase family. PSD-A subfamily. In terms of assembly, heterodimer of a large membrane-associated beta subunit and a small pyruvoyl-containing alpha subunit. It depends on pyruvate as a cofactor. Post-translationally, is synthesized initially as an inactive proenzyme. Formation of the active enzyme involves a self-maturation process in which the active site pyruvoyl group is generated from an internal serine residue via an autocatalytic post-translational modification. Two non-identical subunits are generated from the proenzyme in this reaction, and the pyruvate is formed at the N-terminus of the alpha chain, which is derived from the carboxyl end of the proenzyme. The post-translation cleavage follows an unusual pathway, termed non-hydrolytic serinolysis, in which the side chain hydroxyl group of the serine supplies its oxygen atom to form the C-terminus of the beta chain, while the remainder of the serine residue undergoes an oxidative deamination to produce ammonia and the pyruvoyl prosthetic group on the alpha chain.

The protein resides in the cell membrane. The enzyme catalyses a 1,2-diacyl-sn-glycero-3-phospho-L-serine + H(+) = a 1,2-diacyl-sn-glycero-3-phosphoethanolamine + CO2. It participates in phospholipid metabolism; phosphatidylethanolamine biosynthesis; phosphatidylethanolamine from CDP-diacylglycerol: step 2/2. Catalyzes the formation of phosphatidylethanolamine (PtdEtn) from phosphatidylserine (PtdSer). The sequence is that of Phosphatidylserine decarboxylase proenzyme from Cupriavidus pinatubonensis (strain JMP 134 / LMG 1197) (Cupriavidus necator (strain JMP 134)).